The sequence spans 388 residues: Venom acid phosphatase Acph-1 (388 aa).

The first 15 residues, 1–15 (MSVIAILAMVVGVQA), serve as a signal peptide directing secretion. Catalysis depends on His26, which acts as the Nucleophile. Cystine bridges form between Cys145–Cys355 and Cys330–Cys334. 2 N-linked (GlcNAc...) asparagine glycosylation sites follow: Asn182 and Asn228. The active-site Proton donor is the Glu273. A glycan (N-linked (GlcNAc...) asparagine) is linked at Asn366.

This sequence belongs to the histidine acid phosphatase family. Expressed by the venom gland.

The protein resides in the secreted. It catalyses the reaction a phosphate monoester + H2O = an alcohol + phosphate. This is Venom acid phosphatase Acph-1 from Apis mellifera (Honeybee).